We begin with the raw amino-acid sequence, 352 residues long: Ferrochelatase (352 aa).

Residues His-222 and Glu-303 each contribute to the Fe cation site.

It belongs to the ferrochelatase family.

The protein localises to the cytoplasm. It catalyses the reaction heme b + 2 H(+) = protoporphyrin IX + Fe(2+). Its pathway is porphyrin-containing compound metabolism; protoheme biosynthesis; protoheme from protoporphyrin-IX: step 1/1. In terms of biological role, catalyzes the ferrous insertion into protoporphyrin IX. The chain is Ferrochelatase from Brucella melitensis biotype 2 (strain ATCC 23457).